The chain runs to 151 residues: NADH-quinone oxidoreductase subunit I 2 (151 aa).

4Fe-4S ferredoxin-type domains lie at 49–82 (PRLNINPDNGETLCISCNLCALACPENLIVVTSE) and 93–122 (VTFTYDTSRCMFCGLCEDACPVDALELTQD). Cys62, Cys65, Cys68, Cys72, Cys102, Cys105, Cys108, and Cys112 together coordinate [4Fe-4S] cluster.

Belongs to the complex I 23 kDa subunit family. As to quaternary structure, NDH-1 is composed of 14 different subunits. Subunits NuoA, H, J, K, L, M, N constitute the membrane sector of the complex. Requires [4Fe-4S] cluster as cofactor.

The protein resides in the cell inner membrane. It carries out the reaction a quinone + NADH + 5 H(+)(in) = a quinol + NAD(+) + 4 H(+)(out). In terms of biological role, NDH-1 shuttles electrons from NADH, via FMN and iron-sulfur (Fe-S) centers, to quinones in the respiratory chain. The immediate electron acceptor for the enzyme in this species is believed to be ubiquinone. Couples the redox reaction to proton translocation (for every two electrons transferred, four hydrogen ions are translocated across the cytoplasmic membrane), and thus conserves the redox energy in a proton gradient. This is NADH-quinone oxidoreductase subunit I 2 from Solibacter usitatus (strain Ellin6076).